Reading from the N-terminus, the 288-residue chain is Quinate/shikimate dehydrogenase (288 aa).

Residues K71 and D107 each coordinate substrate. NAD(+) contacts are provided by residues 132 to 135 (AGGA), 155 to 158 (NRRD), K205, 232 to 235 (CVYN), and G255.

This sequence belongs to the shikimate dehydrogenase family. In terms of assembly, homodimer.

It carries out the reaction L-quinate + NAD(+) = 3-dehydroquinate + NADH + H(+). It catalyses the reaction L-quinate + NADP(+) = 3-dehydroquinate + NADPH + H(+). The enzyme catalyses shikimate + NADP(+) = 3-dehydroshikimate + NADPH + H(+). The catalysed reaction is shikimate + NAD(+) = 3-dehydroshikimate + NADH + H(+). It participates in metabolic intermediate biosynthesis; chorismate biosynthesis; chorismate from D-erythrose 4-phosphate and phosphoenolpyruvate: step 4/7. Its function is as follows. The actual biological function of YdiB remains unclear, nor is it known whether 3-dehydroshikimate or quinate represents the natural substrate. Catalyzes the reversible NAD-dependent reduction of both 3-dehydroshikimate (DHSA) and 3-dehydroquinate to yield shikimate (SA) and quinate, respectively. It can use both NAD or NADP for catalysis, however it has higher catalytic efficiency with NAD. This Escherichia coli O7:K1 (strain IAI39 / ExPEC) protein is Quinate/shikimate dehydrogenase.